The chain runs to 172 residues: Histone H1-like protein HC2 (172 aa).

A disordered region spans residues 1–77; sequence MIGAQKKQSG…TVAKKPAVKK (77 aa). A compositionally biased stretch (basic residues) spans 8–77; that stretch reads QSGKKTASRA…TVAKKPAVKK (70 aa).

This sequence belongs to the histone H1/H5 family. HCT subfamily.

Functionally, might have a role in establishing the nucleoid structure of elementary bodies. The protein is Histone H1-like protein HC2 (hctB) of Chlamydia pneumoniae (Chlamydophila pneumoniae).